Here is a 174-residue protein sequence, read N- to C-terminus: Large ribosomal subunit protein uL10 (174 aa).

The protein belongs to the universal ribosomal protein uL10 family. As to quaternary structure, part of the ribosomal stalk of the 50S ribosomal subunit. The N-terminus interacts with L11 and the large rRNA to form the base of the stalk. The C-terminus forms an elongated spine to which L12 dimers bind in a sequential fashion forming a multimeric L10(L12)X complex.

In terms of biological role, forms part of the ribosomal stalk, playing a central role in the interaction of the ribosome with GTP-bound translation factors. In Geobacter metallireducens (strain ATCC 53774 / DSM 7210 / GS-15), this protein is Large ribosomal subunit protein uL10.